The following is a 385-amino-acid chain: 1-deoxy-D-xylulose 5-phosphate reductoisomerase 1 (385 aa).

The NADPH site is built by T11, G12, S13, I14, N39, and N122. K123 contributes to the 1-deoxy-D-xylulose 5-phosphate binding site. Position 124 (E124) interacts with NADPH. A Mn(2+)-binding site is contributed by D148. 1-deoxy-D-xylulose 5-phosphate is bound by residues S149, E150, S174, and H197. E150 serves as a coordination point for Mn(2+). NADPH is bound at residue G203. S210, N215, K216, and E219 together coordinate 1-deoxy-D-xylulose 5-phosphate. E219 contacts Mn(2+).

It belongs to the DXR family. Mg(2+) serves as cofactor. Requires Mn(2+) as cofactor.

It carries out the reaction 2-C-methyl-D-erythritol 4-phosphate + NADP(+) = 1-deoxy-D-xylulose 5-phosphate + NADPH + H(+). It functions in the pathway isoprenoid biosynthesis; isopentenyl diphosphate biosynthesis via DXP pathway; isopentenyl diphosphate from 1-deoxy-D-xylulose 5-phosphate: step 1/6. Functionally, catalyzes the NADPH-dependent rearrangement and reduction of 1-deoxy-D-xylulose-5-phosphate (DXP) to 2-C-methyl-D-erythritol 4-phosphate (MEP). The sequence is that of 1-deoxy-D-xylulose 5-phosphate reductoisomerase 1 from Bacillus thuringiensis subsp. konkukian (strain 97-27).